A 464-amino-acid polypeptide reads, in one-letter code: Probable 3-ketoacyl-CoA synthase 21 (464 aa).

A helical transmembrane segment spans residues 21 to 41 (LLSSGVSVFEIFAGLLVVHLI). The 292-residue stretch at 42-333 (YQRIRTRVKV…VIQHILCKKL (292 aa)) folds into the FAE domain. Residues C187, H352, H356, H385, and N389 contribute to the active site.

The protein belongs to the thiolase-like superfamily. Chalcone/stilbene synthases family. In terms of tissue distribution, expressed in flowers.

The protein resides in the membrane. It carries out the reaction a very-long-chain acyl-CoA + malonyl-CoA + H(+) = a very-long-chain 3-oxoacyl-CoA + CO2 + CoA. It participates in lipid metabolism; fatty acid biosynthesis. The sequence is that of Probable 3-ketoacyl-CoA synthase 21 from Arabidopsis thaliana (Mouse-ear cress).